A 361-amino-acid polypeptide reads, in one-letter code: MSLKAIHVSEVPSLDHFPENPSLICSSRKANNKFVVVGHRGHGMNMSQSPDLRFSALKENSILSFNAASKFPLDFIEFDVQVTRDGCPIIFHDDFIYSEEQGVVYEKRVTEVCLSEFMSYGPQRDTGKTGKPLLRKSKEGKIHKWSVATDDSFCTLQEAFEKVENPNLGFNIELKLDDNVFYSSDHLSRLLLPILQVVSDIGNDRTIIFSSFHPDAALLVRKLQTTYPVFFLTNGGTEMYHDTRRNSLEEAIKVCLEGGLQGIVSEVKGVFRNPALVNKIKESKLSLMTYGKLNNVAEAVYMQHLMGIEGVIVDHVEEITEAVREMMKPSNRDADGTKPKPNFSDRELSFLLKLIPELIQH.

The N-terminal 53 residues, 1-53, are a transit peptide targeting the chloroplast; that stretch reads MSLKAIHVSEVPSLDHFPENPSLICSSRKANNKFVVVGHRGHGMNMSQSPDLR. Residues 54–323 enclose the GP-PDE domain; the sequence is FSALKENSIL…DHVEEITEAV (270 aa).

Belongs to the glycerophosphoryl diester phosphodiesterase family. Mg(2+) serves as cofactor. As to expression, expressed in roots, shoots, rosette leaves, stems, flowers and siliques.

Its subcellular location is the plastid. It is found in the chloroplast. The catalysed reaction is a sn-glycero-3-phosphodiester + H2O = an alcohol + sn-glycerol 3-phosphate + H(+). Functionally, hydrolyzes glycerolphosphoglycerol, glycerophosphocholine and glycerophosphoethanolamine in vitro. May be involved in release of inorganic phosphate (Pi) from phospholipids during Pi starvation. This chain is Glycerophosphodiester phosphodiesterase GDPD1, chloroplastic, found in Arabidopsis thaliana (Mouse-ear cress).